Here is a 391-residue protein sequence, read N- to C-terminus: Tryptophan synthase beta chain (391 aa).

N6-(pyridoxal phosphate)lysine is present on K84.

The protein belongs to the TrpB family. In terms of assembly, tetramer of two alpha and two beta chains. Pyridoxal 5'-phosphate is required as a cofactor.

It carries out the reaction (1S,2R)-1-C-(indol-3-yl)glycerol 3-phosphate + L-serine = D-glyceraldehyde 3-phosphate + L-tryptophan + H2O. Its pathway is amino-acid biosynthesis; L-tryptophan biosynthesis; L-tryptophan from chorismate: step 5/5. Its function is as follows. The beta subunit is responsible for the synthesis of L-tryptophan from indole and L-serine. The sequence is that of Tryptophan synthase beta chain from Thermoanaerobacter pseudethanolicus (strain ATCC 33223 / 39E) (Clostridium thermohydrosulfuricum).